The following is a 5099-amino-acid chain: Malformin synthetase mlfA (5099 aa).

Positions 224 to 615 (QRHAADRPHS…CGRADTQVKL (392 aa)) are adenylation 1. Positions 756–829 (THLENEIQLA…EAASLAKVRD (74 aa)) constitute a Carrier 1 domain. Ser790 carries the post-translational modification O-(pantetheine 4'-phosphoryl)serine. The segment at 867–1297 (EDVFPCTSMQ…PVDSLTLLKP (431 aa)) is condensation 1. An adenylation 2 region spans residues 1325–1717 (DRWVNRQPDT…GRKDTQVKLR (393 aa)). The 78-residue stretch at 1857–1934 (ARAPELERTL…QIATQCEGIA (78 aa)) folds into the Carrier 2 domain. Ser1894 bears the O-(pantetheine 4'-phosphoryl)serine mark. The interval 1995-2040 (MQQESSSSPAPSVSSSSSSSSAPKPLLAQPEPPTNLRDSVPEPFSL) is disordered. Residues 1999-2017 (SSSSPAPSVSSSSSSSSAP) are compositionally biased toward low complexity. A condensation 2 region spans residues 2067–2482 (EDIYPATPLQ…ALSPGDKKVL (416 aa)). An adenylation 3 region spans residues 2505–2897 (LSTPHAPAVC…VGRKDGQLKL (393 aa)). The region spanning 3032–3108 (RPATAQERGL…RLVLHLQNTS (77 aa)) is the Carrier 3 domain. Ser3069 carries the post-translational modification O-(pantetheine 4'-phosphoryl)serine. 2 condensation regions span residues 3125–3589 (WVHL…TYDQ) and 3610–4033 (DIYP…QQAM). The interval 4058-4446 (YANREAVCAW…VGRKDSQIKF (389 aa)) is adenylation 4. One can recognise a Carrier 4 domain in the interval 4581-4657 (PPSTGMQQGI…DLAEHISSRV (77 aa)). Position 4618 is an O-(pantetheine 4'-phosphoryl)serine (Ser4618). Positions 4696 to 5017 (DILPTTGFQR…LQTVVQHQNV (322 aa)) are condensation 5.

Belongs to the NRP synthetase family.

It participates in secondary metabolite biosynthesis. Functionally, nonribosomal peptide synthetase; part of the gene cluster that mediates the biosynthesis of malformins, cyclic pentapeptides with a disulfide bond between 2 consecutive cysteins, that show potential anti-tumor as well as antimalarial and antitrypanosomal properties. The nonribosomal peptide synthetase mlfA is responsible of the formation of the cyclic pentapeptide. The malformin biosynthesis clusters in malformin-producing fungi also contain enzymes involved in the formation of the disulfide bond between the two consecutive cysteins within malformins, in addition to additional tailoring enzymes such as methyltransferases or oxidoreductases. They are also composed of up to 4 major facilitator superfamily transporters, and transcription factors probably involved in the regulation of the expression of those clusters. The chain is Malformin synthetase mlfA from Aspergillus sclerotiicarbonarius (strain CBS 121057 / IBT 28362).